The primary structure comprises 183 residues: Bifunctional protein PyrR (183 aa).

Positions 102–114 (VVLVDDVLYTGRT) match the PRPP-binding motif.

It belongs to the purine/pyrimidine phosphoribosyltransferase family. PyrR subfamily. As to quaternary structure, homodimer and homohexamer; in equilibrium.

It catalyses the reaction UMP + diphosphate = 5-phospho-alpha-D-ribose 1-diphosphate + uracil. Functionally, regulates transcriptional attenuation of the pyrimidine nucleotide (pyr) operon by binding in a uridine-dependent manner to specific sites on pyr mRNA. This disrupts an antiterminator hairpin in the RNA and favors formation of a downstream transcription terminator, leading to a reduced expression of downstream genes. Also displays a weak uracil phosphoribosyltransferase activity which is not physiologically significant. The polypeptide is Bifunctional protein PyrR (Listeria monocytogenes serotype 4b (strain CLIP80459)).